An 87-amino-acid chain; its full sequence is Small ribosomal subunit protein bS16c (87 aa).

It belongs to the bacterial ribosomal protein bS16 family.

It localises to the plastid. Its subcellular location is the chloroplast. This is Small ribosomal subunit protein bS16c from Zygnema circumcarinatum (Green alga).